The sequence spans 193 residues: Flagellar transcriptional regulator FlhC (193 aa).

Residues Cys-138, Cys-141, Cys-158, and Cys-161 each coordinate Zn(2+).

Belongs to the FlhC family. Heterohexamer composed of two FlhC and four FlhD subunits. Each FlhC binds a FlhD dimer, forming a heterotrimer, and a hexamer assembles by dimerization of two heterotrimers. The cofactor is Zn(2+).

The protein resides in the cytoplasm. Functionally, functions in complex with FlhD as a master transcriptional regulator that regulates transcription of several flagellar and non-flagellar operons by binding to their promoter region. Activates expression of class 2 flagellar genes, including fliA, which is a flagellum-specific sigma factor that turns on the class 3 genes. Also regulates genes whose products function in a variety of physiological pathways. The polypeptide is Flagellar transcriptional regulator FlhC (Yersinia enterocolitica).